Consider the following 311-residue polypeptide: DNA-directed RNA polymerase subunit alpha (311 aa).

Residues 1-227 form an alpha N-terminal domain (alpha-NTD) region; it reads MNNISIKCLK…DLFTLLINNK (227 aa). The interval 242 to 311 is alpha C-terminal domain (alpha-CTD); that stretch reads ISIEPYTNIA…LKNKLGIILK (70 aa).

It belongs to the RNA polymerase alpha chain family. In terms of assembly, in plastids the minimal PEP RNA polymerase catalytic core is composed of four subunits: alpha, beta, beta', and beta''. When a (nuclear-encoded) sigma factor is associated with the core the holoenzyme is formed, which can initiate transcription.

The protein resides in the plastid. It is found in the chloroplast. It carries out the reaction RNA(n) + a ribonucleoside 5'-triphosphate = RNA(n+1) + diphosphate. In terms of biological role, DNA-dependent RNA polymerase catalyzes the transcription of DNA into RNA using the four ribonucleoside triphosphates as substrates. In Phaeodactylum tricornutum (strain CCAP 1055/1), this protein is DNA-directed RNA polymerase subunit alpha.